Consider the following 469-residue polypeptide: Adenosylhomocysteinase (469 aa).

3 residues coordinate substrate: Thr-63, Asp-139, and Glu-164. Thr-165–Thr-167 serves as a coordination point for NAD(+). Substrate contacts are provided by Lys-194 and Asp-198. Residues Asn-199, Gly-228 to Gly-233, Glu-251, Asn-300, Ile-321 to His-323, and Asn-375 contribute to the NAD(+) site.

The protein belongs to the adenosylhomocysteinase family. It depends on NAD(+) as a cofactor.

The protein resides in the cytoplasm. The catalysed reaction is S-adenosyl-L-homocysteine + H2O = L-homocysteine + adenosine. The protein operates within amino-acid biosynthesis; L-homocysteine biosynthesis; L-homocysteine from S-adenosyl-L-homocysteine: step 1/1. Its function is as follows. May play a key role in the regulation of the intracellular concentration of adenosylhomocysteine. In Pseudomonas putida (strain ATCC 700007 / DSM 6899 / JCM 31910 / BCRC 17059 / LMG 24140 / F1), this protein is Adenosylhomocysteinase.